A 349-amino-acid polypeptide reads, in one-letter code: UDP-3-O-acylglucosamine N-acyltransferase (349 aa).

The Proton acceptor role is filled by histidine 240.

This sequence belongs to the transferase hexapeptide repeat family. LpxD subfamily. In terms of assembly, homotrimer.

It carries out the reaction a UDP-3-O-[(3R)-3-hydroxyacyl]-alpha-D-glucosamine + a (3R)-hydroxyacyl-[ACP] = a UDP-2-N,3-O-bis[(3R)-3-hydroxyacyl]-alpha-D-glucosamine + holo-[ACP] + H(+). Its pathway is bacterial outer membrane biogenesis; LPS lipid A biosynthesis. In terms of biological role, catalyzes the N-acylation of UDP-3-O-acylglucosamine using 3-hydroxyacyl-ACP as the acyl donor. Is involved in the biosynthesis of lipid A, a phosphorylated glycolipid that anchors the lipopolysaccharide to the outer membrane of the cell. The sequence is that of UDP-3-O-acylglucosamine N-acyltransferase from Porphyromonas gingivalis (strain ATCC 33277 / DSM 20709 / CIP 103683 / JCM 12257 / NCTC 11834 / 2561).